The chain runs to 274 residues: uncharacterized protein (274 aa).

The span at 1 to 17 (MTQLTNFSESFSNQNSN) shows a compositional bias: low complexity. Disordered regions lie at residues 1–38 (MTQL…YYVR) and 222–274 (ELGT…MEFE). The span at 18 to 28 (LHQPYNFNSHQ) shows a compositional bias: polar residues. A compositionally biased stretch (basic and acidic residues) spans 29 to 38 (PPEENHYYVR). Polar residues-rich tracts occupy residues 239 to 249 (PMASPTGSSQI) and 256 to 265 (SPNSLTNGSV).

This is an uncharacterized protein from Caenorhabditis elegans.